The primary structure comprises 216 residues: Transmembrane emp24 domain-containing protein eca (216 aa).

The N-terminal stretch at 1 to 20 (MRDQWICLALVLCALHSACG) is a signal peptide. The Lumenal portion of the chain corresponds to 21-183 (LYFHISETER…RHTSESTNSR (163 aa)). The 97-residue stretch at 30–126 (RKCFIEEVPD…QLRVHLDIQV (97 aa)) folds into the GOLD domain. The stretch at 134–164 (ANVAQKEKLTELQLRIRQLLDQVEQITKEQN) forms a coiled coil. A helical transmembrane segment spans residues 184-203 (VLWWSLAQTVVLVCMGFWQM). At 204-216 (RHLKSFFEAKKLV) the chain is on the cytoplasmic side. Residues 213-216 (KKLV) carry the Prevents secretion from ER motif.

The protein belongs to the EMP24/GP25L family.

It is found in the endoplasmic reticulum membrane. Functionally, eca and bai are essential, though not redundant, for dorsoventral patterning of the embryo. Specifically required during early embryogenesis for the activity of maternal tkv, while the zygotic tkv is not affected. This is Transmembrane emp24 domain-containing protein eca from Drosophila mojavensis (Fruit fly).